We begin with the raw amino-acid sequence, 223 residues long: UPF0758 protein HD_0732 (223 aa).

Residues 98 to 220 enclose the MPN domain; it reads TINTPHLAIM…YFSFEEERFH (123 aa). Zn(2+) is bound by residues His169, His171, and Asp182. The JAMM motif motif lies at 169–182; it reads HNHPSGNCTASQAD.

It belongs to the UPF0758 family.

In Haemophilus ducreyi (strain 35000HP / ATCC 700724), this protein is UPF0758 protein HD_0732.